Here is a 36-residue protein sequence, read N- to C-terminus: Dolichyl-diphosphooligosaccharide--protein glycosyltransferase subunit 2 (36 aa).

The protein belongs to the SWP1 family. As to quaternary structure, component of the oligosaccharyltransferase (OST) complex.

The protein resides in the endoplasmic reticulum. It is found in the endoplasmic reticulum membrane. It participates in protein modification; protein glycosylation. Functionally, subunit of the oligosaccharyl transferase (OST) complex that catalyzes the initial transfer of a defined glycan (Glc(3)Man(9)GlcNAc(2) in eukaryotes) from the lipid carrier dolichol-pyrophosphate to an asparagine residue within an Asn-X-Ser/Thr consensus motif in nascent polypeptide chains, the first step in protein N-glycosylation. N-glycosylation occurs cotranslationally and the complex associates with the Sec61 complex at the channel-forming translocon complex that mediates protein translocation across the endoplasmic reticulum (ER). All subunits are required for a maximal enzyme activity. The chain is Dolichyl-diphosphooligosaccharide--protein glycosyltransferase subunit 2 from Gallus gallus (Chicken).